Reading from the N-terminus, the 175-residue chain is Shikimate kinase (175 aa).

An ATP-binding site is contributed by 14–19; sequence GAGKST. Mg(2+) is bound at residue serine 18. Substrate is bound by residues aspartate 36, arginine 60, and glycine 82. Arginine 120 is a binding site for ATP. Substrate is bound at residue arginine 140. Glutamine 157 is a binding site for ATP.

The protein belongs to the shikimate kinase family. As to quaternary structure, monomer. Requires Mg(2+) as cofactor.

It localises to the cytoplasm. The catalysed reaction is shikimate + ATP = 3-phosphoshikimate + ADP + H(+). Its pathway is metabolic intermediate biosynthesis; chorismate biosynthesis; chorismate from D-erythrose 4-phosphate and phosphoenolpyruvate: step 5/7. Its function is as follows. Catalyzes the specific phosphorylation of the 3-hydroxyl group of shikimic acid using ATP as a cosubstrate. This Histophilus somni (strain 2336) (Haemophilus somnus) protein is Shikimate kinase.